The primary structure comprises 734 residues: MKKMNLVTAALPYVNNIPHLGNLVQVLSADAFARYSKMSGIKTLYVCGTDEYGTATETKALIENTTPLELCNKYYEIHKSIYKWFNIEFDIFGRTTNKNHQDIVQNFFLQLEKNGYIKERETEQFFCNKDSMFLADRYVIGECPECQSMAKGDQCDNCSKLLNPTDLINPKCIICKNKPILKKTNHLYLDLPKIKTKLEKWIKNPDTSKNWNTNALKMTKAFLRDGLKERAITRDLKWGIPVPKKGFENKVFYVWFDAPIGYISITKNIIKNWESWWKNNDQVNLVQFIGKDNILFHTIIFPCIEIGSEENWTILNQLSSSEYLNYENLKFSKSEGTGIFGNDAITTGIPSDIWRFYIYYNRPEKSDFQFMWQDLMERVNTELIDNFSNLVNRVLTFQRKFFGDVIETIEIQNKFWKQITPKYNKILNLFKKTELKSALKEILKISSLGNKIFQDNEPWKRKNNSPQETKELISNLIYLIRDLSILMMPFIPETSKKIQQFFGNSYQFSTKILGTKSGIKKIEFTEILFNKLEQKKINNLKLKYSGDKNMKENEQAENLPIAKEQPENLFREKVLLRVVKINKIERNPEAKNLFILKLDDGTNKDKQIVSGLEGYYTEEELLGKHIIIVDNLKPAKFRGIKSEGMLIAAEDKNKNFKVIIVEDSIQNPIAGERIILENDQNKDLACPPKIDINKFLKANIVAENGELKINGINLILENSKNKILSKDIPNGTVC.

The 'HIGH' region motif lies at Pro12 to Asn22. Residues Cys143, Cys146, Cys155, and Cys158 each contribute to the Zn(2+) site. The short motif at Lys330–Ser334 is the 'KMSKS' region element. Lys333 is an ATP binding site. The 106-residue stretch at Phe570–Ile675 folds into the tRNA-binding domain.

Belongs to the class-I aminoacyl-tRNA synthetase family. MetG type 1 subfamily. As to quaternary structure, homodimer. Zn(2+) serves as cofactor.

The protein localises to the cytoplasm. The catalysed reaction is tRNA(Met) + L-methionine + ATP = L-methionyl-tRNA(Met) + AMP + diphosphate. Functionally, is required not only for elongation of protein synthesis but also for the initiation of all mRNA translation through initiator tRNA(fMet) aminoacylation. This is Methionine--tRNA ligase from Borreliella burgdorferi (strain ZS7) (Borrelia burgdorferi).